The chain runs to 133 residues: MASFITRAERSGNIFSRVTGLIRAGQLNWADRPLWYDVYVSSPPLTPPDWNVKLAKYDEPIRSIFYEEDVLRAKFYKTYRSTAGIQVDSSRTSVSQQFINEYKLVKSENAEATDDQLFEMTQKRLNENGIVLK.

The protein belongs to the mitochondrion-specific ribosomal protein mS23 family. As to quaternary structure, component of the mitochondrial ribosome small subunit (28S) which comprises a 12S rRNA and about 30 distinct proteins.

Its subcellular location is the mitochondrion. The protein is Small ribosomal subunit protein mS23 (mrps-23) of Caenorhabditis elegans.